A 254-amino-acid chain; its full sequence is Pimeloyl-[acyl-carrier protein] methyl ester esterase (254 aa).

The 229-residue stretch at 14-242 (LVLLHGWGMN…ASHAPFISHP (229 aa)) folds into the AB hydrolase-1 domain. Substrate contacts are provided by residues Trp20, 82-83 (SL), and 143-147 (FLAIQ). Ser82 (nucleophile) is an active-site residue. Catalysis depends on residues Asp207 and His235. His235 lines the substrate pocket.

The protein belongs to the AB hydrolase superfamily. Carboxylesterase BioH family. As to quaternary structure, monomer.

The protein localises to the cytoplasm. The enzyme catalyses 6-carboxyhexanoyl-[ACP] methyl ester + H2O = 6-carboxyhexanoyl-[ACP] + methanol + H(+). Its pathway is cofactor biosynthesis; biotin biosynthesis. Functionally, the physiological role of BioH is to remove the methyl group introduced by BioC when the pimeloyl moiety is complete. It allows to synthesize pimeloyl-ACP via the fatty acid synthetic pathway through the hydrolysis of the ester bonds of pimeloyl-ACP esters. This chain is Pimeloyl-[acyl-carrier protein] methyl ester esterase, found in Aeromonas hydrophila subsp. hydrophila (strain ATCC 7966 / DSM 30187 / BCRC 13018 / CCUG 14551 / JCM 1027 / KCTC 2358 / NCIMB 9240 / NCTC 8049).